Consider the following 432-residue polypeptide: Probable exopolygalacturonase C (432 aa).

The first 20 residues, 1-20 (MPISKGIFLSLLSTLPLALA), serve as a signal peptide directing secretion. N-linked (GlcNAc...) asparagine glycans are attached at residues Asn-33, Asn-73, Asn-90, and Asn-140. PbH1 repeat units follow at residues 206-227 (GTNIRISDSVMYNGDDAIAVGS) and 229-250 (SHDIVFERNTIGYQSHGMSIGS). Asp-220 functions as the Proton donor in the catalytic mechanism. His-244 is an active-site residue. An N-linked (GlcNAc...) asparagine glycan is attached at Asn-260. Residues 261 to 282 (ITNLRFEDVTVIDALYAARFKS) form a PbH1 3 repeat. N-linked (GlcNAc...) asparagine glycosylation is found at Asn-292 and Asn-302. Cys-377 and Cys-383 are oxidised to a cystine. Residue Asn-407 is glycosylated (N-linked (GlcNAc...) asparagine).

This sequence belongs to the glycosyl hydrolase 28 family.

It localises to the secreted. It carries out the reaction [(1-&gt;4)-alpha-D-galacturonosyl](n) + H2O = alpha-D-galacturonate + [(1-&gt;4)-alpha-D-galacturonosyl](n-1). Its function is as follows. Specific in hydrolyzing the terminal glycosidic bond of polygalacturonic acid and oligogalacturonates. This is Probable exopolygalacturonase C (pgxC) from Aspergillus terreus (strain NIH 2624 / FGSC A1156).